The following is a 656-amino-acid chain: uncharacterized protein (656 aa).

3 consecutive transmembrane segments (helical) span residues 7 to 27 (QQVLTFVSSLSTFVTIILNHL), 40 to 60 (LMAMTTLMVSLLMSSLTFWTL), and 210 to 230 (AVFISIWLMVILGAAFNAFTI). The HAMP domain occupies 231 to 280 (TRPIRELLTGVKNIASGDFYQRIDLPFGGELGALIFNFNEMAERLEKYEQ). A PAS domain is found at 289 to 359 (EKAKLETLVS…PILNDIIRKN (71 aa)). One can recognise a Histidine kinase domain in the interval 424 to 654 (NVSHELRTPL…CFFFDLMIAK (231 aa)). A Phosphohistidine; by autocatalysis modification is found at His427.

The protein resides in the plastid. Its subcellular location is the chloroplast membrane. The enzyme catalyses ATP + protein L-histidine = ADP + protein N-phospho-L-histidine.. This is an uncharacterized protein from Porphyra purpurea (Red seaweed).